Consider the following 1017-residue polypeptide: Stereoselective keto-reductase af490 (1017 aa).

The interval 6 to 138 is N-terminal hotdog fold; sequence NELSGSQVPG…GRLRMTFAGH (133 aa). Residues 6 to 311 enclose the PKS/mFAS DH domain; the sequence is NELSGSQVPG…MSPIAPSTEK (306 aa). Residues 8 to 306 form a dehydratase (DH) region; the sequence is LSGSQVPGAT…LEGLTMSPIA (299 aa). The tract at residues 153–311 is C-terminal hotdog fold; it reads LRPVSISPFY…MSPIAPSTEK (159 aa). The segment at 532–720 is ketoreductase (KR); it reads QIRFLRAPFD…VQGGRLLIPR (189 aa).

It catalyses the reaction fumagillol + NADP(+) = 5-dehydrofumagillol + NADPH + H(+). It functions in the pathway secondary metabolite biosynthesis; terpenoid biosynthesis. Stereoselective keto-reductase; part of the gene cluster that mediates the biosynthesis of fumagillin, a meroterpenoid that has numerous biological activities including irreversible inhibition of human type 2 methionine aminopeptidase (METAP2). Within the pathway, the keto-reductase af490 acts as a 5-dehydrofumagillol 5-reductase that stereoselectively reduces 5-keto-fumagillol to 5R-hydroxy-seco-sesquiterpene. The pathway begins with the conversion of farnesyl pyrophosphate (FPP) to beta-trans-bergamotene by the membrane-bound beta-trans-bergamotene synthase af520. The multifunctional cytochrome P450 monooxygenase af510 then converts beta-trans-bergamotene into 5-keto-demethoxyfumagillol via several oxydation steps. 5-keto-demethoxyfumagillol is then subjected to successive C-6 hydroxylation and O-methylation by the dioxygenase af480 and O-methyltransferase af390-400, respectively, to yield 5-keto-fumagillol, which is then stereoselectively reduced by the keto-reductase af490 to 5R-hydroxy-seco-sesquiterpene. The next step is the polyketide transferase af380-catalyzed transfer of a dodecapentaenoyl group synthesized by the polyketide synthase af370 onto 5R-hydroxy-seco-sesquiterpene which leads to the production of prefumagillin. Finally, oxidative cleavage by the monooxygenase af470 converts prefumagillin to fumagillin. The protein is Stereoselective keto-reductase af490 of Aspergillus fumigatus (strain ATCC MYA-4609 / CBS 101355 / FGSC A1100 / Af293) (Neosartorya fumigata).